Reading from the N-terminus, the 205-residue chain is Holliday junction branch migration complex subunit RuvA (205 aa).

The segment at 1-64 (MIGKLKGTID…EDQLRLFGFL (64 aa)) is domain I. The segment at 65–143 (SALEREWFRL…AFAGEMSASI (79 aa)) is domain II. A flexible linker region spans residues 144-153 (GLKQELGEGV). Residues 153–205 (VAAAPVSDAVSALTNLGYSRDQAANAVAAALKNGGEGGDSAKLIRLGLKELAR) form a domain III region.

This sequence belongs to the RuvA family. As to quaternary structure, homotetramer. Forms an RuvA(8)-RuvB(12)-Holliday junction (HJ) complex. HJ DNA is sandwiched between 2 RuvA tetramers; dsDNA enters through RuvA and exits via RuvB. An RuvB hexamer assembles on each DNA strand where it exits the tetramer. Each RuvB hexamer is contacted by two RuvA subunits (via domain III) on 2 adjacent RuvB subunits; this complex drives branch migration. In the full resolvosome a probable DNA-RuvA(4)-RuvB(12)-RuvC(2) complex forms which resolves the HJ.

It is found in the cytoplasm. Its function is as follows. The RuvA-RuvB-RuvC complex processes Holliday junction (HJ) DNA during genetic recombination and DNA repair, while the RuvA-RuvB complex plays an important role in the rescue of blocked DNA replication forks via replication fork reversal (RFR). RuvA specifically binds to HJ cruciform DNA, conferring on it an open structure. The RuvB hexamer acts as an ATP-dependent pump, pulling dsDNA into and through the RuvAB complex. HJ branch migration allows RuvC to scan DNA until it finds its consensus sequence, where it cleaves and resolves the cruciform DNA. This chain is Holliday junction branch migration complex subunit RuvA, found in Sinorhizobium fredii (strain NBRC 101917 / NGR234).